Consider the following 358-residue polypeptide: Photosystem II protein D1 3 (358 aa).

3 helical membrane-spanning segments follow: residues 28-45, 117-132, and 141-155; these read YIGW…AATT, HFLI…QWEL, and WICV…AAMA. Histidine 117 serves as a coordination point for chlorophyll a. Tyrosine 125 is a pheophytin a binding site. Aspartate 169 and glutamate 188 together coordinate [CaMn4O5] cluster. The helical transmembrane segment at 196 to 217 threads the bilayer; sequence FHMLGVAGVFGGSLFSAMHGSL. Histidine 197 lines the chlorophyll a pocket. A quinone-binding positions include histidine 214 and 263-264; that span reads SF. Histidine 214 lines the Fe cation pocket. Position 271 (histidine 271) interacts with Fe cation. The helical transmembrane segment at 273 to 287 threads the bilayer; the sequence is LLGAWPVVGIWFTSM. Positions 331, 332, 341, and 343 each coordinate [CaMn4O5] cluster. The propeptide occupies 344–358; the sequence is TVESTPVALQAPAIG.

The protein belongs to the reaction center PufL/M/PsbA/D family. PSII is composed of 1 copy each of membrane proteins PsbA, PsbB, PsbC, PsbD, PsbE, PsbF, PsbH, PsbI, PsbJ, PsbK, PsbL, PsbM, PsbT, PsbX, PsbY, PsbZ, Psb30/Ycf12, peripheral proteins PsbO, CyanoQ (PsbQ), PsbU, PsbV and a large number of cofactors. It forms dimeric complexes. The cofactor is The D1/D2 heterodimer binds P680, chlorophylls that are the primary electron donor of PSII, and subsequent electron acceptors. It shares a non-heme iron and each subunit binds pheophytin, quinone, additional chlorophylls, carotenoids and lipids. D1 provides most of the ligands for the Mn4-Ca-O5 cluster of the oxygen-evolving complex (OEC). There is also a Cl(-1) ion associated with D1 and D2, which is required for oxygen evolution. The PSII complex binds additional chlorophylls, carotenoids and specific lipids.. In terms of processing, tyr-160 forms a radical intermediate that is referred to as redox-active TyrZ, YZ or Y-Z. Post-translationally, C-terminally processed by CtpA; processing is essential to allow assembly of the oxygen-evolving complex and thus photosynthetic growth.

It localises to the cellular thylakoid membrane. It carries out the reaction 2 a plastoquinone + 4 hnu + 2 H2O = 2 a plastoquinol + O2. Functionally, photosystem II (PSII) is a light-driven water:plastoquinone oxidoreductase that uses light energy to abstract electrons from H(2)O, generating O(2) and a proton gradient subsequently used for ATP formation. It consists of a core antenna complex that captures photons, and an electron transfer chain that converts photonic excitation into a charge separation. The D1/D2 (PsbA/PsbD) reaction center heterodimer binds P680, the primary electron donor of PSII as well as several subsequent electron acceptors. The protein is Photosystem II protein D1 3 of Synechococcus sp. (strain CC9311).